A 355-amino-acid polypeptide reads, in one-letter code: Guanine nucleotide-binding protein G(i) subunit alpha-2 (355 aa).

Residue Gly-2 is the site of N-myristoyl glycine attachment. The S-palmitoyl cysteine moiety is linked to residue Cys-3. The region spanning 32–355 (REVKLLLLGA…KNNLKDCGLF (324 aa)) is the G-alpha domain. The segment at 35-48 (KLLLLGAGESGKST) is G1 motif. GTP contacts are provided by residues 40 to 47 (GAGESGKS), 176 to 182 (LRTRVKT), 201 to 205 (DVGGQ), 270 to 273 (NKKD), and Ala-327. Ser-47 provides a ligand contact to Mg(2+). Positions 174–182 (DVLRTRVKT) are G2 motif. ADP-ribosylarginine; by cholera toxin is present on Arg-179. Thr-182 lines the Mg(2+) pocket. Positions 197-206 (FKMFDVGGQR) are G3 motif. Residue Gln-205 is modified to Deamidated glutamine; by Photorhabdus PAU_02230. The segment at 266-273 (ILFLNKKD) is G4 motif. The segment at 325-330 (TCATDT) is G5 motif. Cys-352 is modified (ADP-ribosylcysteine; by pertussis toxin).

It belongs to the G-alpha family. G(i/o/t/z) subfamily. In terms of assembly, g proteins are composed of 3 units; alpha, beta and gamma. The alpha chain contains the guanine nucleotide binding site. In this context, interacts with GNB2. Interacts with GPSM1. Interacts with RGS12 and RGS14. Interacts with UNC5B. Interacts (inactive GDP-bound form) with NUCB1 (via GBA motif); the interaction leads to activation of GNAI3. Interacts (inactive GDP-bound form) with CCDC88C/DAPLE (via GBA motif). Interacts (inactive GDP-bound form) with CCDC8A/GIV (via GBA motif). Interacts with CXCR1 and CXCR2. In terms of processing, (Microbial infection) Deamidated at Gln-205 by Photorhabdus asymbiotica toxin PAU_02230, blocking GTP hydrolysis of heterotrimeric GNAQ or GNA11 and G-alphai (GNAI1, GNAI2 or GNAI3) proteins, thereby activating RhoA.

The protein resides in the cytoplasm. It localises to the cytoskeleton. The protein localises to the microtubule organizing center. It is found in the centrosome. Its subcellular location is the cell membrane. The protein resides in the membrane. Its function is as follows. Guanine nucleotide-binding proteins (G proteins) are involved as modulators or transducers in various transmembrane signaling systems. The G(i) proteins are involved in hormonal regulation of adenylate cyclase: they inhibit the cyclase in response to beta-adrenergic stimuli. May play a role in cell division. Regulates the cell surface density of dopamine receptors DRD2 by sequestrating them as an intracellular pool. This is Guanine nucleotide-binding protein G(i) subunit alpha-2 (GNAI2) from Homo sapiens (Human).